Reading from the N-terminus, the 711-residue chain is Double-stranded RNA-specific editase 1 (711 aa).

The disordered stretch occupies residues 1-78 (MDIEDEENMS…KRRKTPGPVL (78 aa)). Basic residues predominate over residues 63–73 (SKYRLKKRRKT). Residues 78 to 144 (LPKNALMQLN…AEKALRSFVQ (67 aa)) enclose the DRBM 1 domain. Interaction with substrate RNA regions lie at residues 83-88 (LMQLNE) and 104-105 (VH). The residue at position 149 (S149) is a Phosphoserine. Residues 176–220 (LFNGFETPDKSEPPFYVGSNGDDSFSSSGDVSLSASPVPASLTQP) are disordered. Low complexity predominate over residues 192–213 (VGSNGDDSFSSSGDVSLSASPV). Residues 231–298 (PSGKNPVMIL…AQSALATVFN (68 aa)) form the DRBM 2 domain. 2 interaction with substrate RNA regions span residues 237–242 (VMILNE) and H259. Residues 370-707 (SVSTGTKCIN…VEKPTEQDQF (338 aa)) form the A to I editase domain. Zn(2+) is bound at residue H394. E396 acts as the Proton donor in catalysis. Positions 400 and 401 each coordinate 1D-myo-inositol hexakisphosphate. Zn(2+) contacts are provided by C451 and C526. 1D-myo-inositol hexakisphosphate-binding residues include K529, R532, K639, K672, K682, and K700.

Homodimer. Homodimerization is essential for its catalytic activity. Can form heterodimers with isoform 5 of ADAR/ADAR1. 1D-myo-inositol hexakisphosphate is required as a cofactor.

The protein resides in the nucleus. The protein localises to the nucleolus. It catalyses the reaction adenosine in double-stranded RNA + H2O + H(+) = inosine in double-stranded RNA + NH4(+). Functionally, catalyzes the hydrolytic deamination of adenosine to inosine in double-stranded RNA (dsRNA) referred to as A-to-I RNA editing. This may affect gene expression and function in a number of ways that include mRNA translation by changing codons and hence the amino acid sequence of proteins; pre-mRNA splicing by altering splice site recognition sequences; RNA stability by changing sequences involved in nuclease recognition; genetic stability in the case of RNA virus genomes by changing sequences during viral RNA replication; and RNA structure-dependent activities such as microRNA production or targeting or protein-RNA interactions. Can edit both viral and cellular RNAs and can edit RNAs at multiple sites (hyper-editing) or at specific sites (site-specific editing). Its cellular RNA substrates include: bladder cancer-associated protein (BLCAP), neurotransmitter receptors for glutamate (GRIA2 and GRIK2) and serotonin (HTR2C), GABA receptor (GABRA3) and potassium voltage-gated channel (KCNA1). Site-specific RNA editing of transcripts encoding these proteins results in amino acid substitutions which consequently alter their functional activities. Edits GRIA2 at both the Q/R and R/G sites efficiently but converts the adenosine in hotspot1 much less efficiently. Can inhibit cell proliferation and migration and can stimulate exocytosis. This Mus musculus (Mouse) protein is Double-stranded RNA-specific editase 1 (Adarb1).